The following is a 324-amino-acid chain: Acetyl-coenzyme A carboxylase carboxyl transferase subunit alpha (324 aa).

In terms of domain architecture, CoA carboxyltransferase C-terminal spans Arg41–Lys291.

It belongs to the AccA family. Acetyl-CoA carboxylase is a heterohexamer composed of biotin carboxyl carrier protein (AccB), biotin carboxylase (AccC) and two subunits each of ACCase subunit alpha (AccA) and ACCase subunit beta (AccD).

It is found in the cytoplasm. The enzyme catalyses N(6)-carboxybiotinyl-L-lysyl-[protein] + acetyl-CoA = N(6)-biotinyl-L-lysyl-[protein] + malonyl-CoA. The protein operates within lipid metabolism; malonyl-CoA biosynthesis; malonyl-CoA from acetyl-CoA: step 1/1. In terms of biological role, component of the acetyl coenzyme A carboxylase (ACC) complex. First, biotin carboxylase catalyzes the carboxylation of biotin on its carrier protein (BCCP) and then the CO(2) group is transferred by the carboxyltransferase to acetyl-CoA to form malonyl-CoA. The chain is Acetyl-coenzyme A carboxylase carboxyl transferase subunit alpha from Chlamydia muridarum (strain MoPn / Nigg).